Reading from the N-terminus, the 78-residue chain is Small ribosomal subunit protein bS20 (78 aa).

Residues 55-78 are disordered; sequence KSKGLIHKNKASRDKARLASKLAK.

It belongs to the bacterial ribosomal protein bS20 family.

Functionally, binds directly to 16S ribosomal RNA. The sequence is that of Small ribosomal subunit protein bS20 from Streptococcus mutans serotype c (strain ATCC 700610 / UA159).